The primary structure comprises 185 residues: Dual specificity protein phosphatase 3 (185 aa).

The Tyrosine-protein phosphatase domain maps to 28 to 179 (QPCNEVTPRI…LCQLNDRLAK (152 aa)). Cys124 functions as the Phosphocysteine intermediate in the catalytic mechanism.

This sequence belongs to the protein-tyrosine phosphatase family. Non-receptor class dual specificity subfamily. In terms of assembly, microtubule inner protein component of sperm flagellar doublet microtubules. Interacts with VRK3; this interaction activates DUSP3 phosphatase activity.

The protein resides in the nucleus. The protein localises to the cytoplasm. Its subcellular location is the cytoskeleton. It is found in the flagellum axoneme. The enzyme catalyses O-phospho-L-tyrosyl-[protein] + H2O = L-tyrosyl-[protein] + phosphate. The catalysed reaction is O-phospho-L-seryl-[protein] + H2O = L-seryl-[protein] + phosphate. It carries out the reaction O-phospho-L-threonyl-[protein] + H2O = L-threonyl-[protein] + phosphate. In terms of biological role, shows activity both for tyrosine-protein phosphate and serine-protein phosphate, but displays a strong preference toward phosphotyrosines. Specifically dephosphorylates and inactivates ERK1 and ERK2. The chain is Dual specificity protein phosphatase 3 (DUSP3) from Homo sapiens (Human).